A 380-amino-acid chain; its full sequence is 5-amino-6-(D-ribitylamino)uracil--L-tyrosine 4-hydroxyphenyl transferase (380 aa).

Positions 56 to 303 (VTYIINRNIN…GAVARIYLGN (248 aa)) constitute a Radical SAM core domain. Residues C70, C74, and C77 each coordinate [4Fe-4S] cluster.

Belongs to the radical SAM superfamily. CofH family. In terms of assembly, consists of two subunits, CofG and CofH. The cofactor is [4Fe-4S] cluster.

It carries out the reaction 5-amino-6-(D-ribitylamino)uracil + L-tyrosine + S-adenosyl-L-methionine = 5-amino-5-(4-hydroxybenzyl)-6-(D-ribitylimino)-5,6-dihydrouracil + 2-iminoacetate + 5'-deoxyadenosine + L-methionine + H(+). It participates in cofactor biosynthesis; coenzyme F0 biosynthesis. In terms of biological role, catalyzes the radical-mediated synthesis of 5-amino-5-(4-hydroxybenzyl)-6-(D-ribitylimino)-5,6-dihydrouracil from 5-amino-6-(D-ribitylamino)uracil and L-tyrosine. The chain is 5-amino-6-(D-ribitylamino)uracil--L-tyrosine 4-hydroxyphenyl transferase from Nostoc punctiforme (strain ATCC 29133 / PCC 73102).